The chain runs to 636 residues: Fructose-1,6-bisphosphatase class 3 (636 aa).

Belongs to the FBPase class 3 family. Requires Mn(2+) as cofactor.

The enzyme catalyses beta-D-fructose 1,6-bisphosphate + H2O = beta-D-fructose 6-phosphate + phosphate. The protein operates within carbohydrate biosynthesis; gluconeogenesis. This Streptococcus gordonii (strain Challis / ATCC 35105 / BCRC 15272 / CH1 / DL1 / V288) protein is Fructose-1,6-bisphosphatase class 3.